Here is a 347-residue protein sequence, read N- to C-terminus: Uroporphyrinogen decarboxylase (347 aa).

Substrate-binding positions include 23–27 (RQAGR), D73, Y150, T205, and H323.

The protein belongs to the uroporphyrinogen decarboxylase family. In terms of assembly, homodimer.

It is found in the cytoplasm. It catalyses the reaction uroporphyrinogen III + 4 H(+) = coproporphyrinogen III + 4 CO2. The protein operates within porphyrin-containing compound metabolism; protoporphyrin-IX biosynthesis; coproporphyrinogen-III from 5-aminolevulinate: step 4/4. In terms of biological role, catalyzes the decarboxylation of four acetate groups of uroporphyrinogen-III to yield coproporphyrinogen-III. The chain is Uroporphyrinogen decarboxylase from Ruthia magnifica subsp. Calyptogena magnifica.